The chain runs to 366 residues: Probable cyclin-dependent kinase 10 (366 aa).

The Protein kinase domain occupies 7 to 293 (FEKLDSIGEG…ASDAIKHPFF (287 aa)). ATP-binding positions include 13–21 (IGEGTYGIV) and lysine 36. The Proton acceptor role is filled by aspartate 132. Over residues 315 to 358 (FKNQNKKQNNNFNNFVQNNQTNQNNQTNQNNQTNQNNKTSQNNN) the composition is skewed to low complexity. The tract at residues 315-366 (FKNQNKKQNNNFNNFVQNNQTNQNNQTNQNNQTNQNNKTSQNNNMDSYKYSK) is disordered.

This sequence belongs to the protein kinase superfamily. CMGC Ser/Thr protein kinase family. CDC2/CDKX subfamily.

The enzyme catalyses L-seryl-[protein] + ATP = O-phospho-L-seryl-[protein] + ADP + H(+). It carries out the reaction L-threonyl-[protein] + ATP = O-phospho-L-threonyl-[protein] + ADP + H(+). The protein is Probable cyclin-dependent kinase 10 (cdk10) of Dictyostelium discoideum (Social amoeba).